We begin with the raw amino-acid sequence, 425 residues long: Kynureninase (425 aa).

Pyridoxal 5'-phosphate-binding positions include leucine 105, threonine 106, phenylalanine 133 to aspartate 136, aspartate 218, histidine 221, and tyrosine 243. Lysine 244 bears the N6-(pyridoxal phosphate)lysine mark. Pyridoxal 5'-phosphate is bound by residues tryptophan 274 and asparagine 302.

The protein belongs to the kynureninase family. Homodimer. Pyridoxal 5'-phosphate serves as cofactor.

The enzyme catalyses L-kynurenine + H2O = anthranilate + L-alanine + H(+). It catalyses the reaction 3-hydroxy-L-kynurenine + H2O = 3-hydroxyanthranilate + L-alanine + H(+). Its pathway is amino-acid degradation; L-kynurenine degradation; L-alanine and anthranilate from L-kynurenine: step 1/1. It participates in cofactor biosynthesis; NAD(+) biosynthesis; quinolinate from L-kynurenine: step 2/3. Catalyzes the cleavage of L-kynurenine (L-Kyn) and L-3-hydroxykynurenine (L-3OHKyn) into anthranilic acid (AA) and 3-hydroxyanthranilic acid (3-OHAA), respectively. This chain is Kynureninase, found in Flavobacterium psychrophilum (strain ATCC 49511 / DSM 21280 / CIP 103535 / JIP02/86).